The chain runs to 521 residues: Endoplasmic reticulum mannosyl-oligosaccharide 1,2-alpha-mannosidase (521 aa).

Residues 1 to 8 are Cytoplasmic-facing; that stretch reads MVKRRTVK. Residues 9–31 form a helical; Signal-anchor for type II membrane protein membrane-spanning segment; it reads YFLRRILALFVLCVPIYYLYTTV. Topologically, residues 32–521 are lumenal; sequence QRPPGYTKLK…IENNMDLYTV (490 aa). N114, N167, N300, N342, and N378 each carry an N-linked (GlcNAc...) asparagine glycan. Cysteines 330 and 373 form a disulfide. E387 functions as the Proton donor in the catalytic mechanism. The N-linked (GlcNAc...) asparagine glycan is linked to N499. T504 is a binding site for Ca(2+).

This sequence belongs to the glycosyl hydrolase 47 family. Requires Ca(2+) as cofactor.

The protein localises to the membrane. The enzyme catalyses N(4)-(alpha-D-Man-(1-&gt;2)-alpha-D-Man-(1-&gt;2)-alpha-D-Man-(1-&gt;3)-[alpha-D-Man-(1-&gt;2)-alpha-D-Man-(1-&gt;3)-[alpha-D-Man-(1-&gt;2)-alpha-D-Man-(1-&gt;6)]-alpha-D-Man-(1-&gt;6)]-beta-D-Man-(1-&gt;4)-beta-D-GlcNAc-(1-&gt;4)-beta-D-GlcNAc)-L-asparaginyl-[protein] (N-glucan mannose isomer 9A1,2,3B1,2,3) + 4 H2O = N(4)-(alpha-D-Man-(1-&gt;3)-[alpha-D-Man-(1-&gt;3)-[alpha-D-Man-(1-&gt;6)]-alpha-D-Man-(1-&gt;6)]-beta-D-Man-(1-&gt;4)-beta-D-GlcNAc-(1-&gt;4)-beta-D-GlcNAc)-L-asparaginyl-[protein] (N-glucan mannose isomer 5A1,2) + 4 beta-D-mannose. It carries out the reaction N(4)-(alpha-D-Man-(1-&gt;2)-alpha-D-Man-(1-&gt;2)-alpha-D-Man-(1-&gt;3)-[alpha-D-Man-(1-&gt;3)-[alpha-D-Man-(1-&gt;2)-alpha-D-Man-(1-&gt;6)]-alpha-D-Man-(1-&gt;6)]-beta-D-Man-(1-&gt;4)-beta-D-GlcNAc-(1-&gt;4)-beta-D-GlcNAc)-L-asparaginyl-[protein] (N-glucan mannose isomer 8A1,2,3B1,3) + 3 H2O = N(4)-(alpha-D-Man-(1-&gt;3)-[alpha-D-Man-(1-&gt;3)-[alpha-D-Man-(1-&gt;6)]-alpha-D-Man-(1-&gt;6)]-beta-D-Man-(1-&gt;4)-beta-D-GlcNAc-(1-&gt;4)-beta-D-GlcNAc)-L-asparaginyl-[protein] (N-glucan mannose isomer 5A1,2) + 3 beta-D-mannose. The protein operates within protein modification; protein glycosylation. With respect to regulation, inhibited by kifunensine. Its function is as follows. Involved in glycoprotein quality control as it is important for the targeting of misfolded glycoproteins for degradation. It trims a single alpha-1,2-linked mannose residue from Man(9)GlcNAc(2) to produce Man(8)GlcNAc(2) with low efficiency. The polypeptide is Endoplasmic reticulum mannosyl-oligosaccharide 1,2-alpha-mannosidase (Schizosaccharomyces pombe (strain 972 / ATCC 24843) (Fission yeast)).